A 468-amino-acid polypeptide reads, in one-letter code: Mitochondrial dynamics protein MID51 (468 aa).

Topologically, residues 1–29 (MAGVNGDRKGKKDDNGLGTAIDFVLSNAK) are mitochondrial intermembrane. Residues 30-47 (LVLGVGGAAMLGIATLAV) traverse the membrane as a helical segment. At 48-468 (KRMYDRALSA…SDPESLLRTV (421 aa)) the chain is on the cytoplasmic side. Residues 50–196 (MYDRALSAPS…LSGSLYDDLQ (147 aa)) are dimerization. The disordered stretch occupies residues 56–123 (SAPSSPTKAD…RGLARGGRPA (68 aa)). Residues 91 to 108 (QNVSRSLQTLPTSSSSFK) show a composition bias toward polar residues. The tract at residues 161–170 (AALDICAELR) is important for interaction with DNM1L. Residues S188, S190, and H202 each coordinate ADP. The interval 235 to 244 (RRENLEYFPR) is important for interaction with DNM1L. ADP-binding residues include S344, R346, and K372.

This sequence belongs to the MID49/MID51 family. Homodimer.

It localises to the mitochondrion outer membrane. Functionally, mitochondrial outer membrane protein which regulates mitochondrial fission/fusion dynamics. Promotes the recruitment and association of the fission mediator dynamin-related protein 1 (DNM1L) to the mitochondrial surface independently of the mitochondrial fission FIS1 and MFF proteins. Regulates DNM1L GTPase activity and DNM1L oligomerization. The protein is Mitochondrial dynamics protein MID51 (mief1) of Danio rerio (Zebrafish).